Consider the following 599-residue polypeptide: Leucine zipper putative tumor suppressor 1 (599 aa).

Gly-2 is lipidated: N-myristoyl glycine. Disordered stretches follow at residues 135-190 (GAIL…TTSS) and 288-324 (EFAS…KSQR). Positions 153–162 (PPDKPKEQEL) are enriched in basic and acidic residues. Polar residues predominate over residues 174 to 190 (SGRNSMSSLPTHSTTSS). The stretch at 256–572 (LSTDECTIQE…LEKALQQLAR (317 aa)) forms a coiled coil. Residues 288-313 (EFASGQTFEERPRRTRDELECLEPKS) show a composition bias toward basic and acidic residues.

Belongs to the LZTS family. As to quaternary structure, binds EEF1G, TLK2 and CDK1. In terms of processing, phosphorylated on serine residues. Hyperphosphorylated by the cAMP-dependent kinase PKA during cell-cycle progression.

The protein localises to the cytoplasm. Its subcellular location is the cell membrane. The protein resides in the cell projection. It is found in the dendritic spine. It localises to the postsynaptic density. The protein localises to the synapse. Its function is as follows. Involved in the regulation of cell growth. May stabilize the active CDC2-cyclin B1 complex and thereby contribute to the regulation of the cell cycle and the prevention of uncontrolled cell proliferation. May act as tumor suppressor. The polypeptide is Leucine zipper putative tumor suppressor 1 (Lzts1) (Mus musculus (Mouse)).